A 516-amino-acid polypeptide reads, in one-letter code: 4-hydroxybenzoate brominase (decarboxylating) (516 aa).

Positions 13, 32, 40, 41, 51, 102, and 365 each coordinate FAD.

It belongs to the FMO family. FAD is required as a cofactor.

The enzyme catalyses 2 bromide + 4-hydroxybenzoate + 2 NADPH + 2 O2 + 5 H(+) = 2,4-dibromophenol + CO2 + 2 NADP(+) + 4 H2O. The catalysed reaction is bromide + 4-hydroxybenzoate + NADPH + O2 + 2 H(+) = 3-bromo-4-hydroxybenzoate + NADP(+) + 2 H2O. It carries out the reaction 3-bromo-4-hydroxybenzoate + bromide + NADPH + O2 + 3 H(+) = 2,4-dibromophenol + CO2 + NADP(+) + 2 H2O. It catalyses the reaction 3,4-dihydroxybenzoate + 2 bromide + 2 NADPH + 2 O2 + 5 H(+) = 3,5-dibromobenzene-1,2-diol + CO2 + 2 NADP(+) + 4 H2O. The enzyme catalyses 3,4-dihydroxybenzoate + bromide + NADPH + O2 + 2 H(+) = 3-bromo-4,5-dihydroxybenzoate + NADP(+) + 2 H2O. The catalysed reaction is 3-bromo-4,5-dihydroxybenzoate + bromide + NADPH + O2 + 3 H(+) = 3,5-dibromobenzene-1,2-diol + CO2 + NADP(+) + 2 H2O. Functionally, brominase involved in the biosynthesis of polybrominated aromatic organic compounds. Catalyzes the bromination of 4-hydroxybenzoate (4-HBA) to 3-bromo-4-hydroxybenzoate, followed by bromination and decarboxylation of 3-bromo-4-hydroxybenzoate to 2,4-dibromophenol. Can also use 3,4-dihydroxybenzoate, with lower efficiency, forming 3-bromo-4,5-dihydroxybenzoate and 3,5-dibromobenzene-1,2-diol. The polypeptide is 4-hydroxybenzoate brominase (decarboxylating) (Marinomonas mediterranea (strain ATCC 700492 / JCM 21426 / NBRC 103028 / MMB-1)).